The following is a 638-amino-acid chain: MSQQETHGFQTEVKQLLHLMIHSLYSNKEIFLRELVSNAADAADKLRYEALTNDNLYEGDGELRVRISADKEKGTVTIEDNGIGMTRDGVIEHLGTIAKSGTADFFKKLSGDESKDSQLIGQFGVGFYSSFIVADRVTVRTRAAGHSADEAVLWESAGEGDFTVETISKQTRGTEITLHLRDDEKEFADDYRLRSIITKYSDHISVPVEMFEAGTPAVEATEDTEAVAATEGSWKPMNKATALWTRNKSDVSDEEYQEFYKHISHDFTDPLLWSHNRVEGKQEYTSLLYIPAKAPWDMWNRDRKHGLKLFVQRVFVMDDAEQFMPSYLRFVQGLIDSNDLPLNVSREILQDNKVTTALRTAVTKRVLGMLEKLAKNDAEKYQSFWTEFGQVLKEGPAEDFANKERIAGLLRFASTHTGEATPNVSLADYIERMQEGQSKIYYIVADSHEAAANSPHLELLRKKGIEVLLMSERIDEWLINHLTEFDGKKLHSVTRGDLELGELEDDDEKEAQEKLQTESEGLVKRVKDSLGDKVSEVKVTTRLTDTPACVVAGEGEMSTQMIKLMQAAGQDVPEPKPTFELNPEHPLVARLNDEQDEQQFAQWSELLLQQALLSEKGSLADPSAFIKLMNQMLLASVK.

Positions 1–346 (MSQQETHGFQ…SNDLPLNVSR (346 aa)) are a; substrate-binding. Positions 347 to 563 (EILQDNKVTT…EGEMSTQMIK (217 aa)) are b. Residues 564–638 (LMQAAGQDVP…MNQMLLASVK (75 aa)) are c.

This sequence belongs to the heat shock protein 90 family. Homodimer.

It localises to the cytoplasm. Its function is as follows. Molecular chaperone. Has ATPase activity. This Shewanella pealeana (strain ATCC 700345 / ANG-SQ1) protein is Chaperone protein HtpG.